Consider the following 84-residue polypeptide: RNA-binding protein Hfq (84 aa).

Residues 9–68 (DPYLNTLRKERVPVSIYLVNGIKLQGQIESFDQFVILLKNTVSQMVYKHAISTVVPSRPV) enclose the Sm domain.

It belongs to the Hfq family. Homohexamer.

Its function is as follows. RNA chaperone that binds small regulatory RNA (sRNAs) and mRNAs to facilitate mRNA translational regulation in response to envelope stress, environmental stress and changes in metabolite concentrations. Also binds with high specificity to tRNAs. This chain is RNA-binding protein Hfq, found in Azotobacter vinelandii (strain DJ / ATCC BAA-1303).